Consider the following 292-residue polypeptide: L-serine dehydratase, alpha chain (292 aa).

Belongs to the iron-sulfur dependent L-serine dehydratase family. In terms of assembly, heterooctamer of four alpha chains and four beta chains. It depends on [4Fe-4S] cluster as a cofactor.

It catalyses the reaction L-serine = pyruvate + NH4(+). It functions in the pathway carbohydrate biosynthesis; gluconeogenesis. In Peptoniphilus asaccharolyticus (Peptostreptococcus asaccharolyticus), this protein is L-serine dehydratase, alpha chain (sdhA).